We begin with the raw amino-acid sequence, 295 residues long: 4-hydroxy-tetrahydrodipicolinate synthase (295 aa).

T47 provides a ligand contact to pyruvate. Y135 (proton donor/acceptor) is an active-site residue. The Schiff-base intermediate with substrate role is filled by K163. I206 provides a ligand contact to pyruvate.

Homodimer. In fact, exists in a monomer-dimer equilibrium in solution, shifted in favor of the dimer in presence of the substrate pyruvate; the monomer has significantly reduced activity compared with the dimer.

It is found in the cytoplasm. It catalyses the reaction L-aspartate 4-semialdehyde + pyruvate = (2S,4S)-4-hydroxy-2,3,4,5-tetrahydrodipicolinate + H2O + H(+). The protein operates within amino-acid biosynthesis; L-lysine biosynthesis via DAP pathway; (S)-tetrahydrodipicolinate from L-aspartate: step 3/4. With respect to regulation, is insensitive to lysine-feedback inhibition. Shows ASA substrate inhibition. Catalyzes the condensation of (S)-aspartate-beta-semialdehyde [(S)-ASA] and pyruvate to 4-hydroxy-tetrahydrodipicolinate (HTPA). The polypeptide is 4-hydroxy-tetrahydrodipicolinate synthase (Staphylococcus aureus (strain MRSA252)).